Consider the following 248-residue polypeptide: uncharacterized protein (248 aa).

8-32 (EVALVTGASSGIGKAIALELASAGL) is a binding site for NADP(+). Ser134 serves as a coordination point for substrate. The Proton acceptor role is filled by Tyr147.

The protein belongs to the short-chain dehydrogenases/reductases (SDR) family.

This is an uncharacterized protein from Sinorhizobium fredii (strain NBRC 101917 / NGR234).